We begin with the raw amino-acid sequence, 732 residues long: MKKTIFQQLFLSVCALTVALPCSAQSPETSGKEFTLEQLMPGGKEFYNFYPEYVVGLQWMGDNYVFIEGDDLVFNKANGKSAQTTRFSAADLNALMPEGCKFQTTDAFPSFRTLDAGRGQVVLFTQRGLVGFDMLARKVTYLFDTNEETASLDFSPVGDRVAYVRNHNLYIARGGKLGEGMSRAIAVTIDGAETLVYGQAVHQREFGIEKGTFWSPKGSCLAFYRMDQSMVKPTPIVDYHPLEAESKPLYYPMAGTPSHHVTVGIYHLATGKTVYLQTGEPKEKFLTNLSWSPDENILYVAEVNRAQNECKVNAYDAETGRFVRTLFVETDKHYVEPLHPLTFLPGSNNQFIWQSRRDGWNHLYLYDTTGRLIRQVTKGEWEVTNFAGFDPKGTRLYFESTEASPLERHFYCIDIKGGKTKDLTPESGMHRTQLSPDGSAIIDIFQSPTVPRKVTVTNIGKGSYTLLEAKNPDTGYAMPEIRTGTIMAADGQTPLYYKLTMPLHFDPAKKYPVIVYVYGGPHAQLVTKTWRSSVGGWDIYMAQKGYAVFTVDSRGSANRGAAFEQVIHRRLGQTEMADQMCGVDFLKSQSWVDADRIGVHGWSYGGFMTTNLMLTHGDVFKVGVAGGPVIDWNRYEIMYGERYFDAPQENPEGYDAANLLKRAGDLKGRLMLIHGAIDPVVVWQHSLLFLDACVKARTYPDYYVYPSHEHNVMGPDRVHLYETITRYFTDHL.

Positions 1 to 24 are cleaved as a signal peptide; the sequence is MKKTIFQQLFLSVCALTVALPCSA. Catalysis depends on charge relay system residues Ser603, Asp678, and His710.

The protein belongs to the peptidase S9B family.

The enzyme catalyses Hydrolysis of Xaa-Xaa-Pro-|-Yaa- releasing the N-terminal tripeptide of a peptide with Pro as the third residue (position P1) and where Yaa is not proline.. In terms of biological role, serine proteinase. Releases tripeptides from the free amino terminus of proteins. Has a requirement for Pro in the P1 position, but is inactivated by Pro in the P1' position. The sequence is that of Prolyl tripeptidyl peptidase from Porphyromonas gingivalis (strain ATCC 33277 / DSM 20709 / CIP 103683 / JCM 12257 / NCTC 11834 / 2561).